A 335-amino-acid polypeptide reads, in one-letter code: Holliday junction branch migration complex subunit RuvB (335 aa).

The segment at 4–183 (ADNLNVTSII…FGIVQRLEFY (180 aa)) is large ATPase domain (RuvB-L). ATP-binding positions include R23, G64, K67, T68, T69, 130 to 132 (EDY), R173, Y183, and R220. T68 lines the Mg(2+) pocket. Positions 184–254 (PTKDLQNIIS…VAMNALNMLN (71 aa)) are small ATPAse domain (RuvB-S). The head domain (RuvB-H) stretch occupies residues 257–335 (TAGFNFMDRQ…HFSLKQSRDI (79 aa)). DNA-binding residues include R293, R312, and R317.

This sequence belongs to the RuvB family. In terms of assembly, homohexamer. Forms an RuvA(8)-RuvB(12)-Holliday junction (HJ) complex. HJ DNA is sandwiched between 2 RuvA tetramers; dsDNA enters through RuvA and exits via RuvB. An RuvB hexamer assembles on each DNA strand where it exits the tetramer. Each RuvB hexamer is contacted by two RuvA subunits (via domain III) on 2 adjacent RuvB subunits; this complex drives branch migration. In the full resolvosome a probable DNA-RuvA(4)-RuvB(12)-RuvC(2) complex forms which resolves the HJ.

The protein localises to the cytoplasm. The enzyme catalyses ATP + H2O = ADP + phosphate + H(+). In terms of biological role, the RuvA-RuvB-RuvC complex processes Holliday junction (HJ) DNA during genetic recombination and DNA repair, while the RuvA-RuvB complex plays an important role in the rescue of blocked DNA replication forks via replication fork reversal (RFR). RuvA specifically binds to HJ cruciform DNA, conferring on it an open structure. The RuvB hexamer acts as an ATP-dependent pump, pulling dsDNA into and through the RuvAB complex. RuvB forms 2 homohexamers on either side of HJ DNA bound by 1 or 2 RuvA tetramers; 4 subunits per hexamer contact DNA at a time. Coordinated motions by a converter formed by DNA-disengaged RuvB subunits stimulates ATP hydrolysis and nucleotide exchange. Immobilization of the converter enables RuvB to convert the ATP-contained energy into a lever motion, pulling 2 nucleotides of DNA out of the RuvA tetramer per ATP hydrolyzed, thus driving DNA branch migration. The RuvB motors rotate together with the DNA substrate, which together with the progressing nucleotide cycle form the mechanistic basis for DNA recombination by continuous HJ branch migration. Branch migration allows RuvC to scan DNA until it finds its consensus sequence, where it cleaves and resolves cruciform DNA. This chain is Holliday junction branch migration complex subunit RuvB, found in Baumannia cicadellinicola subsp. Homalodisca coagulata.